The primary structure comprises 400 residues: Phosphoglycerate kinase (400 aa).

Residues 23 to 25, Arg-38, 61 to 64, Arg-120, and Arg-153 contribute to the substrate site; these read DLN and HFGR. ATP contacts are provided by residues Lys-203, Glu-325, and 355–358; that span reads GGDT.

It belongs to the phosphoglycerate kinase family. As to quaternary structure, monomer.

It is found in the cytoplasm. The catalysed reaction is (2R)-3-phosphoglycerate + ATP = (2R)-3-phospho-glyceroyl phosphate + ADP. It functions in the pathway carbohydrate degradation; glycolysis; pyruvate from D-glyceraldehyde 3-phosphate: step 2/5. The protein is Phosphoglycerate kinase of Rhizobium leguminosarum bv. trifolii (strain WSM2304).